Consider the following 365-residue polypeptide: Pyridoxal reductase, chloroplastic (365 aa).

A chloroplast-targeting transit peptide spans 1-15 (MALTLSTTKTFTNIN). The active-site Proton donor is the tyrosine 94.

It belongs to the aldo/keto reductase family. In terms of assembly, monomer. Expressed in cotyledons, embryos, flowers, shoots, roots and seeds.

The protein localises to the plastid. Its subcellular location is the chloroplast. The catalysed reaction is pyridoxine + NADP(+) = pyridoxal + NADPH + H(+). It functions in the pathway cofactor degradation; B6 vitamer degradation; pyridoxal from pyridoxine (dehydrogenase route): step 1/1. In terms of biological role, catalyzes the reduction of pyridoxal (PL) with NADPH and oxidation of pyridoxine (PN) with NADP(+). Involved in the PLP salvage pathway. The chain is Pyridoxal reductase, chloroplastic (PLR1) from Arabidopsis thaliana (Mouse-ear cress).